Consider the following 1165-residue polypeptide: Integrin alpha-L (1165 aa).

The first 23 residues, 1-23 (MNSCIIVLRLLLSGPFVFAPAWS), serve as a signal peptide directing secretion. At 24-1084 (YNLDVRHVQN…MKVDLVYEKE (1061 aa)) the chain is on the extracellular side. FG-GAP repeat units follow at residues 29-80 (RHVQ…DCLP) and 81-138 (VTLS…GPVL). A glycan (N-linked (GlcNAc...) asparagine) is linked at N33. An intrachain disulfide couples C71 to C78. A glycan (N-linked (GlcNAc...) asparagine) is linked at N86. A disulfide bridge links C108 with C126. The VWFA domain maps to 153-324 (DLVFLFDGSM…EKLKDLFTEL (172 aa)). N-linked (GlcNAc...) asparagine glycosylation occurs at N185. 5 FG-GAP repeats span residues 335-386 (SKQD…SSTF), 387-442 (VGNE…GGPW), 443-503 (SQIQ…EFQM), 504-560 (VSEL…GLSP), and 564-624 (QRIE…FSPA). Positions 465, 467, 469, 473, 527, 529, 531, 535, 587, 591, and 595 each coordinate Ca(2+). Residues N646, N667, and N723 are each glycosylated (N-linked (GlcNAc...) asparagine). Residues C650 and C704 are joined by a disulfide bond. Disulfide bonds link C768–C774 and C842–C858. N-linked (GlcNAc...) asparagine glycosylation is found at N859, N894, and N929. 2 disulfides stabilise this stretch: C994-C1009 and C1017-C1048. N1056 and N1067 each carry an N-linked (GlcNAc...) asparagine glycan. Residues 1085–1105 (MLYLYVLSGIGGLLLLFLIFI) form a helical membrane-spanning segment. The Cytoplasmic portion of the chain corresponds to 1106–1165 (ALYKVGFFKRNLKEKMEANVDASSEIPGEDAGQPELEKECKDPGCLEPLQKTDEDGSGGD). Residues 1111 to 1115 (GFFKR) carry the GFFKR motif motif. The tract at residues 1123 to 1165 (ANVDASSEIPGEDAGQPELEKECKDPGCLEPLQKTDEDGSGGD) is disordered. Residues 1140–1159 (ELEKECKDPGCLEPLQKTDE) are compositionally biased toward basic and acidic residues.

It belongs to the integrin alpha chain family. In terms of assembly, heterodimer of an alpha and a beta subunit. The ITGAL alpha subunit associates with the ITGB2 beta subunit. Interacts with THBD. Interacts with CD226. Post-translationally, in resting T-cells, up to 40% of surface ITGAL is constitutively phosphorylated. Phosphorylation causes conformational changes needed for ligand binding and is necessary for the activation by some physiological agents.

Its subcellular location is the cell membrane. Integrin ITGAL/ITGB2 is a receptor for ICAM1, ICAM2, ICAM3 and ICAM4. Integrin ITGAL/ITGB2 is a receptor for F11R. Integrin ITGAL/ITGB2 is a receptor for the secreted form of ubiquitin-like protein ISG15; the interaction is mediated by ITGAL. Involved in a variety of immune phenomena including leukocyte-endothelial cell interaction, cytotoxic T-cell mediated killing, and antibody dependent killing by granulocytes and monocytes. Contributes to natural killer cell cytotoxicity. Involved in leukocyte adhesion and transmigration of leukocytes including T-cells and neutrophils. Acts as a platform at the immunological synapse to translate TCR engagement and density of the ITGAL ligand ICAM1 into graded adhesion. Required for generation of common lymphoid progenitor cells in bone marrow, indicating the role in lymphopoiesis. Integrin ITGAL/ITGB2 in association with ICAM3, contributes to apoptotic neutrophil phagocytosis by macrophages. The sequence is that of Integrin alpha-L from Bos taurus (Bovine).